We begin with the raw amino-acid sequence, 199 residues long: Recombination protein RecR (199 aa).

The segment at 58-73 adopts a C4-type zinc-finger fold; sequence CRICYNITDTEVCNIC. The 96-residue stretch at 81-176 folds into the Toprim domain; the sequence is SLICVVSHPM…KVTRIAHGVP (96 aa).

Belongs to the RecR family.

In terms of biological role, may play a role in DNA repair. It seems to be involved in an RecBC-independent recombinational process of DNA repair. It may act with RecF and RecO. This is Recombination protein RecR from Thermoanaerobacter pseudethanolicus (strain ATCC 33223 / 39E) (Clostridium thermohydrosulfuricum).